We begin with the raw amino-acid sequence, 301 residues long: E3 ubiquitin-protein ligase RNF144B (301 aa).

The segment at 26–242 (PLVTCKLCLC…YDKGPCRNKL (217 aa)) is TRIAD supradomain. Residues Cys-30, Cys-33, Cys-53, Cys-56, Cys-121, Cys-126, Cys-145, Cys-148, Cys-153, Cys-156, His-161, Cys-166, Cys-191, and Cys-194 each contribute to the Zn(2+) site. The RING-type 1 zinc finger occupies 30–80 (CKLCLCEQSLDKMTMLQECQCIFCTPCLKQYMVLSIREGCGSPITCPDMVC). Residues 101 to 166 (QLYQRLKFER…KDAWHEESSC (66 aa)) form an IBR-type zinc finger. An RING-type 2; atypical zinc finger spans residues 191–220 (CPVCRIYIERNEGCAQMMCKNCKHTFCWYC). The active site involves Cys-204. 6 residues coordinate Zn(2+): Cys-209, Cys-212, Cys-217, Cys-220, His-232, and Cys-238. Residues 256–276 (VVGILVGLGVIALVTSPLLLL) form a helical membrane-spanning segment.

This sequence belongs to the RBR family. RNF144 subfamily. As to quaternary structure, interacts with UBE2L3, UBE2L6 and LCMT2, as well as with BAX. Interacts with TBK1; this interaction inhibits TBK1 phosphorylation and 'Lys-63'-linked polyubiquitination. Post-translationally, auto-ubiquitinated.

The protein resides in the mitochondrion membrane. It is found in the cytoplasm. It carries out the reaction [E2 ubiquitin-conjugating enzyme]-S-ubiquitinyl-L-cysteine + [acceptor protein]-L-lysine = [E2 ubiquitin-conjugating enzyme]-L-cysteine + [acceptor protein]-N(6)-ubiquitinyl-L-lysine.. It participates in protein modification; protein ubiquitination. Its function is as follows. E3 ubiquitin-protein ligase which accepts ubiquitin from E2 ubiquitin-conjugating enzymes UBE2L3 and UBE2L6 in the form of a thioester and then directly transfers the ubiquitin to targeted substrates such as LCMT2, thereby promoting their degradation. Induces apoptosis via a p53/TP53-dependent but caspase-independent mechanism. Plays a crucial role in maintaining the genomic stability by controlling the degradation of multiple proteins involved in mitotic progression and DNA damage. Regulates epithelial homeostasis by mediating degradation of CDKN1A and isoform 2 of TP63. Plays a regulatory role in innate immunity by negatively regulating IRF3 activation and IFN-beta production. Mechanistically, inhibits TBK1 phosphorylation and 'Lys-63'-linked polyubiquitination independently of its E3 ligase activity. Alternatively, promotes 'Lys-27' and 'Lys-33'-linked ubiquitination of IFIH1/MDA5, promoting selective autophagic degradation of IFIH1/MDA5 to inhibit antiviral response. This is E3 ubiquitin-protein ligase RNF144B (Rnf144b) from Mus musculus (Mouse).